A 122-amino-acid chain; its full sequence is Large ribosomal subunit protein uL22 (122 aa).

The protein belongs to the universal ribosomal protein uL22 family. Part of the 50S ribosomal subunit.

In terms of biological role, this protein binds specifically to 23S rRNA; its binding is stimulated by other ribosomal proteins, e.g. L4, L17, and L20. It is important during the early stages of 50S assembly. It makes multiple contacts with different domains of the 23S rRNA in the assembled 50S subunit and ribosome. The globular domain of the protein is located near the polypeptide exit tunnel on the outside of the subunit, while an extended beta-hairpin is found that lines the wall of the exit tunnel in the center of the 70S ribosome. This is Large ribosomal subunit protein uL22 from Thermosynechococcus vestitus (strain NIES-2133 / IAM M-273 / BP-1).